The following is a 305-amino-acid chain: N-acetylneuraminate lyase A (305 aa).

The aceneuramate site is built by T51 and T52. Y143 acts as the Proton donor in catalysis. The active-site Schiff-base intermediate with substrate is the K173. S175, G197, D199, E200, and S216 together coordinate aceneuramate.

The protein belongs to the DapA family. NanA subfamily. In terms of assembly, homotetramer.

The protein localises to the cytoplasm. The catalysed reaction is aceneuramate = aldehydo-N-acetyl-D-mannosamine + pyruvate. Its pathway is amino-sugar metabolism; N-acetylneuraminate degradation. Functionally, catalyzes the cleavage of N-acetylneuraminic acid (sialic acid) to form pyruvate and N-acetylmannosamine via a Schiff base intermediate. It prevents sialic acids from being recycled and returning to the cell surface. Involved in the N-glycolylneuraminic acid (Neu5Gc) degradation pathway. This is N-acetylneuraminate lyase A (npl-a) from Xenopus laevis (African clawed frog).